The following is a 401-amino-acid chain: Nodal homolog 3-B (401 aa).

An N-terminal signal peptide occupies residues 1 to 18 (MAFLSLFLCLVFSSPLMA). Residues 19-274 (MPPALQGRKA…KVNGFRRLRR (256 aa)) constitute a propeptide that is removed on maturation. N-linked (GlcNAc...) asparagine glycosylation is found at N168, N337, and N344. 2 disulfides stabilise this stretch: C299-C365 and C328-C396.

It belongs to the TGF-beta family. As to quaternary structure, monomer. The propeptide region interacts with bmp4 in a non-covalent manner. As to expression, expressed in the dorsal marginal region of late blastula, becoming restricted to the Spemann organizer at the early gastrula stage.

The protein localises to the secreted. Functionally, exhibits mesoderm-dorsalizing activity and neural-inducing activity, but lacks mesoderm-inducing activity. Regulates the expression of specific mesodermal and neural genes. Induces convergent extension movements at the embryonic midline by activating the fgf signaling pathway to induce t/bra expression in the organizer region. Acts with wnt11 to induce Spemann organizer cells and induce axis formation. The unprocessed protein antagonizes bmp-signaling. The chain is Nodal homolog 3-B from Xenopus tropicalis (Western clawed frog).